Here is a 451-residue protein sequence, read N- to C-terminus: Glycylpeptide N-tetradecanoyltransferase (451 aa).

Residues 177–179 and 185–189 each bind tetradecanoyl-CoA; these read LCI and NKRLA. Leu451 serves as the catalytic Proton acceptor; via carboxylate.

It belongs to the NMT family. In terms of assembly, monomer.

It localises to the cytoplasm. It carries out the reaction N-terminal glycyl-[protein] + tetradecanoyl-CoA = N-tetradecanoylglycyl-[protein] + CoA + H(+). Its activity is regulated as follows. Competitively inhibited by SC-58272, a peptidomimetic derived from the N-terminal sequence of a natural substrate. Adds a myristoyl group to the N-terminal glycine residue of certain cellular proteins. Substrate specificity requires an N-terminal glycine in the nascent polypeptide substrates. Ser is present at position 5 in almost all known N-myristoyl proteins and Lys is commonly encountered at postion 6. Basic residues are preferred at positions 7 and 8. This is Glycylpeptide N-tetradecanoyltransferase (NMT1) from Candida albicans (strain SC5314 / ATCC MYA-2876) (Yeast).